The sequence spans 2541 residues: MVALSLKISIGNVVKTMQFEPSTMVYDACRIIRERIPEAPAGPPSDFGLFLSDDDPKKGIWLEAGKALDYYMLRNGDTMEYRKKQRPLKIRMLDGTVKTIMVDDSKTVTDMLMTICARIGITNHDEYSLVRELMEEKKEEITGTLRKDKTLLRDEKKMEKLKQKLHTDDELNWLDHGRTLREQGVEEHETLLLRRKFFYSDQNVDSRDPVQLNLLYVQARDDILNGSHPVSFDKACEFAGFQCQIQFGPHNEQKHKAGFLDLKDFLPKEYVKQKGERKIFQAHKNCGQMSEIEAKVRYVKLARSLKTYGVSFFLVKEKMKGKNKLVPRLLGITKECVMRVDEKTKEVIQEWNLTNIKRWAASPKSFTLDFGDYQDGYYSVQTTEGEQIAQLIAGYIDIILKKKKSKDHFGLEGDEESTMLEDSVSPKKSTVLQQQYNRVGKVEHGSVALPAIMRSGASGPENFQVGSMPPAQQQITSGQMHRGHMPPLTSAQQALTGTINSSMQAVQAAQATLDDFDTLPPLGQDAASKAWRKNKMDESKHEIHSQVDAITAGTASVVNLTAGDPAETDYTAVGCAVTTISSNLTEMSRGVKLLAALLEDEGGSGRPLLQAAKGLAGAVSELLRSAQPASAEPRQNLLQAAGNVGQASGELLQQIGESDTDPHFQDALMQLAKAVASAAAALVLKAKSVAQRTEDSGLQTQVIAAATQCALSTSQLVACTKVVAPTISSPVCQEQLVEAGRLVAKAVEGCVSASQAATEDGQLLRGVGAAATAVTQALNELLQHVKAHATGAGPAGRYDQATDTILTVTENIFSSMGDAGEMVRQARILAQATSDLVNAIKADAEGESDLENSRKLLSAAKILADATAKMVEAAKGAAAHPDSEEQQQRLREAAEGLRMATNAAAQNAIKKKLVQRLEHAAKQAAASATQTIAAAQHAASTPKASAGPQPLLVQSCKAVAEQIPLLVQGVRGSQAQPDSPSAQLALIAASQSFLQPGGKMVAAAKASVPTIQDQASAMQLSQCAKNLGTALAELRTAAQKAQEACGPLEMDSALSVVQNLEKDLQEVKAAARDGKLKPLPGETMEKCTQDLGNSTKAVSSAIAQLLGEVAQGNENYAGIAARDVAGGLRSLAQAARGVAALTSDPAVQAIVLDTASDVLDKASSLIEEAKKAAGHPGDPESQQRLAQVAKAVTQALNRCVSCLPGQRDVDNALRAVGDASKRLLSDSLPPSTGTFQEAQSRLNEAAAGLNQAATELVQASRGTPQDLARASGRFGQDFSTFLEAGVEMAGQAPSQEDRAQVVSNLKGISMSSSKLLLAAKALSTDPAAPNLKSQLAAAARAVTDSINQLITMCTQQAPGQKECDNALRELETVRELLENPVQPINDMSYFGCLDSVMENSKVLGEAMTGISQNAKNGNLPEFGDAISTASKALCGFTEAAAQAAYLVGVSDPNSQAGQQGLVEPTQFARANQAIQMACQSLGEPGCTQAQVLSAATIVAKHTSALCNSCRLASARTTNPTAKRQFVQSAKEVANSTANLVKTIKALDGAFTEENRAQCRAATAPLLEAVDNLSAFASNPEFSSIPAQISPEGRAAMEPIVISAKTMLESAGGLIQTARALAVNPRDPPSWSVLAGHSRTVSDSIKKLITSMRDKAPGQLECETAIAALNSCLRDLDQASLAAVSQQLAPREGISQEALHTQMLTAVQEISHLIEPLANAARAEASQLGHKVSQMAQYFEPLTLAAVGAASKTLSHPQQMALLDQTKTLAESALQLLYTAKEAGGNPKQAAHTQEALEEAVQMMTEAVEDLTTTLNEAASAAGVVGGMVDSITQAINQLDEGPMGEPEGSFVDYQTTMVRTAKAIAVTVQEMVTKSNTSPEELGPLANQLTSDYGRLASEAKPAAVAAENEEIGSHIKHRVQELGHGCAALVTKAGALQCSPSDAYTKKELIECARRVSEKVSHVLAALQAGNRGTQACITAASAVSGIIADLDTTIMFATAGTLNREGTETFADHREGILKTAKVLVEDTKVLVQNAAGSQEKLAQAAQSSVATITRLADVVKLGAASLGAEDPETQVVLINAVKDVAKALGDLISATKAAAGKVGDDPAVWQLKNSAKVMVTNVTSLLKTVKAVEDEATKGTRALEATTEHIRQELAVFCSPEPPAKTSTPEDFIRMTKGITMATAKAVAAGNSCRQEDVIATANLSRRAIADMLRACKEAAYHPEVAPDVRLRALHYGRECANGYLELLDHVLLTLQKPSPELKQQLTGHSKRVAGSVTELIQAAEAMKGTEWVDPEDPTVIAENELLGAAAAIEAAAKKLEQLKPRAKPKEADESLNFEEQILEAAKSIAAATSALVKAASAAQRELVAQGKVGAIPANALDDGQWSQGLISAARMVAAATNNLCEAANAAVQGHASQEKLISSAKQVAASTAQLLVACKVKADQDSEAMKRLQAAGNAVKRASDNLVKAAQKAAAFEEQENETVVVKEKMVGGIAQIIAAQEEMLRKERELEEARKKLAQIRQQQYKFLPSELRDEH.

The 318-residue stretch at 86–403 (RPLKIRMLDG…GYIDIILKKK (318 aa)) folds into the FERM domain. A Phosphothreonine modification is found at Thr167. The segment at 280-435 (FQAHKNCGQM…PKKSTVLQQQ (156 aa)) is interaction with LAYN. 5 positions are modified to phosphoserine: Ser405, Ser425, Ser446, Ser620, and Ser729. Residues 482–655 (RGHMPPLTSA…QASGELLQQI (174 aa)) form a helical bundle R1 region. The segment at 656-786 (GESDTDPHFQ…ALNELLQHVK (131 aa)) is helical bundle R2. The helical bundle R3 stretch occupies residues 787-911 (AHATGAGPAG…NAAAQNAIKK (125 aa)). Residues 913–1044 (LVQRLEHAAK…RTAAQKAQEA (132 aa)) form a helical bundle R4 region. At Ser1021 the chain carries Phosphoserine. The tract at residues 1046–1206 (GPLEMDSALS…NRCVSCLPGQ (161 aa)) is helical bundle R5. Tyr1116 is modified (phosphotyrosine). Position 1142 is a phosphothreonine (Thr1142). 2 positions are modified to phosphoserine: Ser1201 and Ser1225. The interval 1207 to 1357 (RDVDNALRAV…QLITMCTQQA (151 aa)) is helical bundle R6. Position 1263 is a phosphothreonine (Thr1263). Position 1323 is a phosphoserine (Ser1323). Residues 1327–1948 (AAPNLKSQLA…CSPSDAYTKK (622 aa)) form an interaction with SYNM region. The interval 1358-1453 (PGQKECDNAL…AYLVGVSDPN (96 aa)) is helical bundle R7A. The interval 1359-1659 (GQKECDNALR…SMRDKAPGQL (301 aa)) is interaction with VCL and F-actin. Positions 1461–1580 (LVEPTQFARA…NLSAFASNPE (120 aa)) are helical bundle R8. The residue at position 1544 (Lys1544) is an N6-acetyllysine. The helical bundle R7B stretch occupies residues 1581 to 1653 (FSSIPAQISP…IKKLITSMRD (73 aa)). The interval 1655-1822 (APGQLECETA…TLNEAASAAG (168 aa)) is helical bundle R9. The helical bundle R10 stretch occupies residues 1823–1973 (VVGGMVDSIT…VLAALQAGNR (151 aa)). Ser1849 is modified (phosphoserine). Residue Thr1855 is modified to Phosphothreonine. Position 1878 is a phosphoserine (Ser1878). The segment at 1974–2140 (GTQACITAAS…TVKAVEDEAT (167 aa)) is helical bundle R11. Position 2031 is an N6-acetyllysine (Lys2031). The residue at position 2040 (Ser2040) is a Phosphoserine. Lys2115 bears the N6-acetyllysine mark. Residues 2141 to 2294 (KGTRALEATT…QAAEAMKGTE (154 aa)) form a helical bundle R12 region. Residues 2293-2533 (TEWVDPEDPT…QIRQQQYKFL (241 aa)) form the I/LWEQ domain. The helical bundle R13 stretch occupies residues 2300–2482 (DPTVIAENEL…AAQKAAAFEE (183 aa)).

As to quaternary structure, part of a complex composed of THSD1, PTK2/FAK1, TLN1 and VCL. Interacts with THSD1; this promotes interaction with PTK2/FAK1 and VCL. Binds with high affinity to VCL and with low affinity to integrins. Interacts with APBB1IP; this inhibits VCL binding. Interacts with PTK2/FAK1. Interacts with PIP5K1C and NRAP. Interacts with LAYN. Interacts with SYNM. Interacts with ITGB1; the interaction is prevented by competitive binding of ITGB1BP1. Interacts with SVEP1. Interacts (via R7 domain) with KANK1 or KANK2 (via KN motif); this interaction likely initiates the assembly of cortical microtubule stabilization complexes (CMSCs) at the vicinity of focal adhesions. In terms of assembly, interacts with VCL; shows reduced VCL binding compared to isoform 2. Interacts with APBB1IP; shows similar level of binding compared to isoform 2. Interacts with VCL; shows enhanced VCL binding compared to isoform 1. Interacts with APBB1IP; shows similar level of binding compared to isoform 1. As to quaternary structure, (Microbial infection) Interacts with human cytomegalovirus protein UL135. As to expression, expressed at low to non-detectable levels in many tissues but highly expressed in skin and pancreas with other tissues including kidney cortex, endocervix, testis, pituitary, liver, and spleen also showing robust expression.

It localises to the cell projection. It is found in the ruffle membrane. Its subcellular location is the cytoplasm. The protein resides in the cytoskeleton. The protein localises to the cell surface. It localises to the cell junction. It is found in the focal adhesion. High molecular weight cytoskeletal protein concentrated at regions of cell-matrix and cell-cell contacts. Involved in connections of major cytoskeletal structures to the plasma membrane. With KANK1 co-organize the assembly of cortical microtubule stabilizing complexes (CMSCs) positioned to control microtubule-actin crosstalk at focal adhesions (FAs) rims. This is Talin-1 (TLN1) from Homo sapiens (Human).